We begin with the raw amino-acid sequence, 144 residues long: Actin-associated protein FAM107A (144 aa).

A coiled-coil region spans residues 67–94 (LQRVLEHRRRNQLIKKKKEELEAKRLQC). Positions 74-84 (RRRNQLIKKKK) match the Nuclear localization signal motif. A disordered region spans residues 105–124 (QRLNQLEKPPEKEEDHAPEF). The segment covering 112–124 (KPPEKEEDHAPEF) has biased composition (basic and acidic residues).

The protein belongs to the FAM107 family. Interacts with ACTB. Interacts with COMMD1; this interaction stabilizes COMMD1 in the nucleus. Interacts with MAP1A. Interacts with PRDX1. Interacts with F-actin.

It localises to the nucleus. The protein resides in the cytoplasm. The protein localises to the cytoskeleton. Its subcellular location is the stress fiber. It is found in the cell junction. It localises to the focal adhesion. The protein resides in the cell projection. The protein localises to the ruffle membrane. Its subcellular location is the synapse. Stress-inducible actin-binding protein that plays a role in synaptic and cognitive functions by modulating actin filamentous (F-actin) dynamics. Mediates polymerization of globular actin to F-actin. Also binds to, stabilizes and bundles F-actin. Involved in synaptic function by regulating neurite outgrowth in an actin-dependent manner and for the acquisition of hippocampus-dependent cognitive function, such as learning and long-term memory. Plays a role in the actin and microtubule cytoskeleton organization; negatively regulates focal adhesion (FA) assembly promoting malignant glial cell migration in an actin-, microtubule- and MAP1A-dependent manner. Also involved in neuroblastoma G1/S phase cell cycle progression and cell proliferation inhibition by stimulating ubiquitination of NF-kappa-B subunit RELA and NF-kappa-B degradation in a COMMD1- and actin-dependent manner. May play a role in tumor development. In Pan troglodytes (Chimpanzee), this protein is Actin-associated protein FAM107A (FAM107A).